The following is a 284-amino-acid chain: Bifunctional protein FolD (284 aa).

Position 166 to 168 (166 to 168) interacts with NADP(+); that stretch reads GAS.

Belongs to the tetrahydrofolate dehydrogenase/cyclohydrolase family. In terms of assembly, homodimer.

It carries out the reaction (6R)-5,10-methylene-5,6,7,8-tetrahydrofolate + NADP(+) = (6R)-5,10-methenyltetrahydrofolate + NADPH. The enzyme catalyses (6R)-5,10-methenyltetrahydrofolate + H2O = (6R)-10-formyltetrahydrofolate + H(+). It functions in the pathway one-carbon metabolism; tetrahydrofolate interconversion. Functionally, catalyzes the oxidation of 5,10-methylenetetrahydrofolate to 5,10-methenyltetrahydrofolate and then the hydrolysis of 5,10-methenyltetrahydrofolate to 10-formyltetrahydrofolate. The polypeptide is Bifunctional protein FolD (Legionella pneumophila (strain Corby)).